We begin with the raw amino-acid sequence, 1085 residues long: MPVSMAVCETANVVNAALRESLGGNSSAAGSSADQAKSGEESNGSLQNHIVANAKRILMAKIEYEEVPNYHESVLESLKSKYIVIKPGNPGAINGFGGKNNTGKVVGANGHDNNGARKQAEHPNNQSHHNNHNNHPHPTSNPNELPKPKRVLYPRENIRIGWKQSERKWQVGTGMINVGNTCYLNSTLQALLHIPALANWLVSEQAHLENCNVAESGGGCIVCAMAKTLLATQSNQSAVRPFLIYSKLKQICKHMVVGRQEDAHEFLRFLVEAMERAYLMRFRNYKELDQLVKETTPLGQIFGGYLRSEVRCLSCNHVSITFQHFQDLLLDIRKADTLEDAFEGHFSRERLEDMGYKCEGCKKKVSATKQFSLERAPITLCIQLKRFSMIGNKLTKQISFKPRIDLSKYAARSPAAQAQPLTYRLVSMVTHLGVSQHCGHYTAIGSTDTGSYYNFDDSYVRPIAMQSVCNTNAYIMFYELDLSQTASPAANRPNGMRLTNGHSTTPVPATTVSSPSPTRFIGPQLPPGGVNGYSNGNAQKTAIQFKQHHQQSQQNGFQLGTGKFQDTAKPPLVGAHAKGEANPAPTANGNKSSSTSSNNSSSSNHKSINQQQYLPISSEDEDSEDERTSRPSTVQLPSMPKMTDDHTEKPKSPVKIQAKTPIKTPLKSLVPYESASEEEEAPLPNPRKRRSGEDSSESDQESGQTNGHSKTNGSLTNGSASSSVHVNNSKLKTDAIDEIFKSLKKSADSDDDDDEEESSIQLTNGWHPQKQSQSQSKAPPSPKTPPSPAVIKSKTGIWKVTRNDEVDDIDDDDDEEEEATVKIQTPSKTHRNPFSSSKPSTDSPATPGAKRQKLLNGSPVKSHQQPRVGNGYQSEATSNGSTINELLKQSHRGYGSSVLSWNGKPAELEKETFELVCAKRIAGHGSVDGSDIVESSVAVNASSGSDSNDVVVIAVALLVDAREQRQRDLDDDEENEMDRGRQRKVKSGSAKGNNASNSTPGYNPFQEYEGQKRWNKNGGGGGGFPRFYNQNFRQNFQQRNKFKFNRFGGPGGAKFQQQRALQRHLAAGGGFSRRQPSAQQQQQQS.

Residues 23–36 are compositionally biased toward low complexity; it reads GGNSSAAGSSADQA. Disordered stretches follow at residues 23–47 and 104–149; these read GGNS…GSLQ and KVVG…PKPK. The USP domain occupies 173 to 481; that stretch reads TGMINVGNTC…NAYIMFYELD (309 aa). The active-site Nucleophile is C182. Catalysis depends on H440, which acts as the Proton acceptor. 4 disordered regions span residues 489–730, 745–888, 963–1030, and 1043–1085; these read AANR…NNSK, KSAD…ELLK, EQRQ…FYNQ, and KFNR…QQQS. A compositionally biased stretch (low complexity) spans 503 to 518; it reads STTPVPATTVSSPSPT. Residues S514 and S516 each carry the phosphoserine modification. The segment covering 532–542 has biased composition (polar residues); that stretch reads GYSNGNAQKTA. The segment covering 588-609 has biased composition (low complexity); sequence NGNKSSSTSSNNSSSSNHKSIN. Residues 642-651 are compositionally biased toward basic and acidic residues; the sequence is MTDDHTEKPK. Phosphothreonine is present on residues T660 and T664. S674 and S676 each carry phosphoserine. Positions 705–730 are enriched in polar residues; the sequence is TNGHSKTNGSLTNGSASSSVHVNNSK. Phosphoserine is present on S749. Residues 749–758 are compositionally biased toward acidic residues; that stretch reads SDDDDDEEES. Positions 768–778 are enriched in low complexity; the sequence is PQKQSQSQSKA. Positions 779–788 are enriched in pro residues; that stretch reads PPSPKTPPSP. S781 is modified (phosphoserine). Residue T784 is modified to Phosphothreonine. S787 bears the Phosphoserine mark. Residues 805 to 818 show a composition bias toward acidic residues; it reads EVDDIDDDDDEEEE. Positions 822-844 are enriched in polar residues; sequence KIQTPSKTHRNPFSSSKPSTDSP. A Phosphothreonine modification is found at T825. S843 is subject to Phosphoserine. The residue at position 846 (T846) is a Phosphothreonine. Residues 859-884 are compositionally biased toward polar residues; that stretch reads PVKSHQQPRVGNGYQSEATSNGSTIN. Composition is skewed to low complexity over residues 987–998 and 1056–1066; these read SGSAKGNNASNS and QQQRALQRHLA.

This sequence belongs to the peptidase C19 family. Interacts with atms/PAF1, but not with CycT.

Its subcellular location is the nucleus. The protein localises to the nucleolus. The catalysed reaction is Thiol-dependent hydrolysis of ester, thioester, amide, peptide and isopeptide bonds formed by the C-terminal Gly of ubiquitin (a 76-residue protein attached to proteins as an intracellular targeting signal).. Functionally, required for maintaining multiple types of adult stem cells, including male and female germline, epithelial follicle cell and intestinal stem cells. May function as a transcriptional repressor by continually deubiquiting histone H2B at the promoters of genes critical for cellular differentiation, thereby preventing histone H3 'Lys-4' trimethylation (H3K4). Controls selective autophagy activation by ubiquitinated proteins. The sequence is that of Ubiquitin carboxyl-terminal hydrolase 36 (Usp36) from Drosophila erecta (Fruit fly).